The following is a 483-amino-acid chain: 6-phosphogluconate dehydrogenase, decarboxylating (483 aa).

Residues 10-15 and 33-35 contribute to the NADP(+) site; these read GLAVMG and NRT. At Lys-38 the chain carries N6-acetyllysine. Ser-57 is modified (phosphoserine). Lys-59 carries the N6-acetyllysine modification. Residues 75–77 and Asn-103 contribute to the NADP(+) site; that span reads VKA. Residues Asn-103 and 129–131 contribute to the substrate site; that span reads SGG. Ser-129 carries the phosphoserine modification. Catalysis depends on Lys-184, which acts as the Proton acceptor. Substrate is bound at residue 187–188; that stretch reads HN. Glu-191 functions as the Proton donor in the catalytic mechanism. Positions 192, 261, 288, 447, and 453 each coordinate substrate. 478 to 481 provides a ligand contact to NADP(+); sequence SSSY.

It belongs to the 6-phosphogluconate dehydrogenase family. In terms of assembly, homodimer.

The protein resides in the cytoplasm. It catalyses the reaction 6-phospho-D-gluconate + NADP(+) = D-ribulose 5-phosphate + CO2 + NADPH. Its pathway is carbohydrate degradation; pentose phosphate pathway; D-ribulose 5-phosphate from D-glucose 6-phosphate (oxidative stage): step 3/3. Functionally, catalyzes the oxidative decarboxylation of 6-phosphogluconate to ribulose 5-phosphate and CO(2), with concomitant reduction of NADP to NADPH. This chain is 6-phosphogluconate dehydrogenase, decarboxylating (Pgd), found in Mus musculus (Mouse).